The primary structure comprises 134 residues: UPF0412 protein YaaI (134 aa).

A signal peptide spans 1–23 (MKSVITISASLAISLMLCCTAQA).

This sequence belongs to the UPF0412 family.

The polypeptide is UPF0412 protein YaaI (Escherichia coli (strain UTI89 / UPEC)).